The chain runs to 353 residues: Photosystem II D2 protein (353 aa).

Thr2 bears the N-acetylthreonine mark. Thr2 is modified (phosphothreonine). The chain crosses the membrane as a helical span at residues 41–61 (CAYFALGGWFTGTTFVTSWYT). Position 118 (His118) interacts with chlorophyll a. Residues 125-141 (GFMLRQFELARSVQLRP) form a helical membrane-spanning segment. Pheophytin a contacts are provided by Gln130 and Asn143. The helical transmembrane segment at 153–166 (VFVSVFLIYPLGQS) threads the bilayer. His198 is a chlorophyll a binding site. A helical transmembrane segment spans residues 208 to 228 (AALLCAIHGATVENTLFEDGD). A plastoquinone is bound by residues His215 and Phe262. A Fe cation-binding site is contributed by His215. His269 is a Fe cation binding site. The chain crosses the membrane as a helical span at residues 279–295 (GLWMSALGVVGLALNLR).

This sequence belongs to the reaction center PufL/M/PsbA/D family. PSII is composed of 1 copy each of membrane proteins PsbA, PsbB, PsbC, PsbD, PsbE, PsbF, PsbH, PsbI, PsbJ, PsbK, PsbL, PsbM, PsbT, PsbX, PsbY, PsbZ, Psb30/Ycf12, at least 3 peripheral proteins of the oxygen-evolving complex and a large number of cofactors. It forms dimeric complexes. Interacts with PAM68. The D1/D2 heterodimer binds P680, chlorophylls that are the primary electron donor of PSII, and subsequent electron acceptors. It shares a non-heme iron and each subunit binds pheophytin, quinone, additional chlorophylls, carotenoids and lipids. There is also a Cl(-1) ion associated with D1 and D2, which is required for oxygen evolution. The PSII complex binds additional chlorophylls, carotenoids and specific lipids. is required as a cofactor. In terms of processing, phosphorylation occurs in normal plant growth light conditions. Rapid dephosphorylation occurs during heat shock.

Its subcellular location is the plastid. The protein resides in the chloroplast thylakoid membrane. The enzyme catalyses 2 a plastoquinone + 4 hnu + 2 H2O = 2 a plastoquinol + O2. Functionally, photosystem II (PSII) is a light-driven water:plastoquinone oxidoreductase that uses light energy to abstract electrons from H(2)O, generating O(2) and a proton gradient subsequently used for ATP formation. It consists of a core antenna complex that captures photons, and an electron transfer chain that converts photonic excitation into a charge separation. The D1/D2 (PsbA/PsbD) reaction center heterodimer binds P680, the primary electron donor of PSII as well as several subsequent electron acceptors. D2 is needed for assembly of a stable PSII complex. This chain is Photosystem II D2 protein, found in Arabidopsis thaliana (Mouse-ear cress).